The primary structure comprises 558 residues: Cytochrome P450 monooxygenase grgG (558 aa).

The helical transmembrane segment at proline 11 to leucine 31 threads the bilayer. Heme is bound at residue cysteine 470.

Belongs to the cytochrome P450 family. Heme is required as a cofactor.

It is found in the membrane. It functions in the pathway secondary metabolite biosynthesis. Cytochrome P450 monooxygenase; part of the gene cluster that mediates the biosynthesis of gregatin A, a fungal polyketide featuring an alkylated furanone core. The PKS grgA synthesizes C11 and C4 polyketide chains in the presence and absence of the trans-enoyl reductase grgB, respectively. The polyketide transferase grgF is then responsible for the fusion of the two carbon chains to produce the furanone skeleton of gregatin A. Next, the cytochrome P450 monooxygenase grgG performs the oxidative cyclization to furnish the gregatin scaffold and leads to the formation of desmethylgregatin A. In this transformation, grgG initially abstracts a hydrogen atom from C-8 to generate a substrate radical, from which one electron is transferred to the iron-heme center to yield a carbocationic species. Heterocyclization along with double-bond isomerizations provides desmethylgregatin A with the furanone ring. Alternatively, grgG might provide hydroxylation at the C-8 radical, which is followed by dehydration to give the cyclized desmethylgregatin A. Finally, the O-methyltransferase grgD methylates the carboxyl group of desmethylgregatin A to provide gregatin A. The polypeptide is Cytochrome P450 monooxygenase grgG (grgG) (Penicillium sp).